Reading from the N-terminus, the 83-residue chain is Sulfur carrier protein TusA (83 aa).

Cysteine 19 (cysteine persulfide intermediate) is an active-site residue.

It belongs to the sulfur carrier protein TusA family.

Its subcellular location is the cytoplasm. Functionally, sulfur carrier protein which probably makes part of a sulfur-relay system. The polypeptide is Sulfur carrier protein TusA (Vibrio atlanticus (strain LGP32) (Vibrio splendidus (strain Mel32))).